A 134-amino-acid polypeptide reads, in one-letter code: Phosphoribosyl-AMP cyclohydrolase (134 aa).

Residue Asp78 participates in Mg(2+) binding. Zn(2+) is bound at residue Cys79. Mg(2+)-binding residues include Asp80 and Asp82. Residues Cys96 and Cys103 each coordinate Zn(2+).

The protein belongs to the PRA-CH family. As to quaternary structure, homodimer. Requires Mg(2+) as cofactor. It depends on Zn(2+) as a cofactor.

Its subcellular location is the cytoplasm. The catalysed reaction is 1-(5-phospho-beta-D-ribosyl)-5'-AMP + H2O = 1-(5-phospho-beta-D-ribosyl)-5-[(5-phospho-beta-D-ribosylamino)methylideneamino]imidazole-4-carboxamide. The protein operates within amino-acid biosynthesis; L-histidine biosynthesis; L-histidine from 5-phospho-alpha-D-ribose 1-diphosphate: step 3/9. Functionally, catalyzes the hydrolysis of the adenine ring of phosphoribosyl-AMP. The protein is Phosphoribosyl-AMP cyclohydrolase of Cupriavidus necator (strain ATCC 17699 / DSM 428 / KCTC 22496 / NCIMB 10442 / H16 / Stanier 337) (Ralstonia eutropha).